Consider the following 233-residue polypeptide: MILIASPFSLAHLEYLNTWHAHIKNIAQQHGLDIKVAIVISNTHLNNFLPVSTPLNIECITFPGCGIKEIDLLWARIKLFQHYCAIGARLLWLVSADIRPSVSTWPAIADSLKKGADAVVVPYPSRWNNLIPTVIKEIVVRQKKCLVAVDAHHLDTDTQIVGAGMGCIVLTLKALMVRLSIGKQPIKILWPDLHGTAEGIPLEGVEVGWFLNAYAHKLNIRCLGRDYIAQHLN.

Belongs to the asfivirus H233R family.

This is an uncharacterized protein from Ornithodoros (relapsing fever ticks).